We begin with the raw amino-acid sequence, 534 residues long: MAAVSLRQGDLVWGKLGRYPPWPGKIVNPPKDLKKPRGKKCLFVKFFGTEDHAWIKVEQLKPYHAHKEEMIKANKGKRFQQAVDAVEEFLKKAKAKEHAKEHNSSDEKGKKGEGKGKKQTGEKRRKSSESSSHSPQKRSRDQSPRKRGRPPKDDKDSPSPQPSSLKKLAMKTVSRFSWPPPSTEDDLGSDSWLIHGHRTLGTEMILKKPSVTYQAITKRLKISEEDSGSTSIQAADSTAINGNIIPTDKKIGFLGLGLMGSGIVSNLLKMGHTVTVWNRTAEKCDLFIQEGAHMGRTPAEVVSTCDITFACVADPKAAKDLVLGPSGVLQGIRPGKCYVDMSTVDPETVAELAQVIVSRGGRFLEAPVSGNQQLSNDGMLVILAAGDQGVYEDCSSCFLAMGKTSFFLGEVGNAARMMLILNMVQGSFMATIAEGMTLAQVTGQSQQTLLDILNQGQLASIFLDQKCQNILQGNFKPDFYLKYIQKDLRLAIALGDSVNHPTPMAAAANEVYKRAKALDQSDNDMSAVYRAYIH.

The PWWP domain maps to 8-66 (QGDLVWGKLGRYPPWPGKIVNPPKDLKKPRGKKCLFVKFFGTEDHAWIKVEQLKPYHAH). 2 stretches are compositionally biased toward basic and acidic residues: residues 93-122 (AKAKEHAKEHNSSDEKGKKGEGKGKKQTGE) and 138-157 (RSRDQSPRKRGRPPKDDKDS). The disordered stretch occupies residues 93 to 168 (AKAKEHAKEH…SPQPSSLKKL (76 aa)). The a.T hook DNA-binding region spans 144-156 (PRKRGRPPKDDKD). The interval 190–193 (DSWL) is interaction with histone H3. The tract at residues 242–534 (GNIIPTDKKI…MSAVYRAYIH (293 aa)) is dehydrogenase domain. NAD(+) is bound by residues 252-266 (GFLGLGLMGSGIVSN), threonine 343, and lysine 486.

Belongs to the HIBADH-related family. NP60 subfamily. In terms of assembly, homotetramere. Binds to mononucleosomes.

It is found in the nucleus. It localises to the chromosome. Cytokine-like nuclear factor with chromatin gene reader activity involved in chromatin modification and regulation of gene expression. Acts as a nucleosome-destabilizing factor that is recruited to genes during transcriptional activation. Recognizes and binds histone H3 without a preference for specific epigenetic markers and also binds DNA. Interacts with KDM1B and promotes its histone demethylase activity by facilitating the capture of H3 tails, they form a multifunctional enzyme complex that modifies transcribed chromatin and facilitates Pol II transcription through nucleosomes. The sequence is that of Cytokine-like nuclear factor N-PAC (glyr1) from Xenopus tropicalis (Western clawed frog).